The primary structure comprises 271 residues: ATP synthase subunit a (271 aa).

5 helical membrane passes run 31 to 51 (WDTI…GLYM), 89 to 109 (FVAP…WIGV), 124 to 144 (DINL…IVSL), 186 to 206 (IFSG…VLWL), and 216 to 236 (LGVG…YYAF). Residues 247 to 271 (DEHADGGDSSSRQASPTPLPAGQVR) are disordered.

The protein belongs to the ATPase A chain family. As to quaternary structure, F-type ATPases have 2 components, CF(1) - the catalytic core - and CF(0) - the membrane proton channel. CF(1) has five subunits: alpha(3), beta(3), gamma(1), delta(1), epsilon(1). CF(0) has three main subunits: a(1), b(2) and c(9-12). The alpha and beta chains form an alternating ring which encloses part of the gamma chain. CF(1) is attached to CF(0) by a central stalk formed by the gamma and epsilon chains, while a peripheral stalk is formed by the delta and b chains.

It localises to the cell membrane. Its function is as follows. Key component of the proton channel; it plays a direct role in the translocation of protons across the membrane. This chain is ATP synthase subunit a, found in Acidothermus cellulolyticus (strain ATCC 43068 / DSM 8971 / 11B).